The primary structure comprises 888 residues: MNFQEFKHKYGYDAATKMMQQYLDIKFAHLDCLLLFRMGDFYEMFYEDAVLASGVLGIALTKRGKNGDEEVPMCGVPYHALENYLTKLIEENYKVAICDQLETPEEAKNRGGYKAVVNRNVTRIITPGTVIEENLITTAEPNYLASLVVPKNKDTAALCYADLSTSTIFVVNVPELEILNELARLKPREILLSEHLRSSDLASNISKQLNFRITYQVDSFFAVNKCEKIILDFYKMKDIKGVGEISNSQICAIGSILEYLTLTQKENIPNLPKPKIIDFHSYMTIDFSTRRNLEIVTNSCGGNKGSLLSTLNHTVTKQGGRLLYNFLSSPLTDTHKINQRLNITEFFHSNLDITAKVRELLKKTSDIERCLTRITMNRGSGRDLLSIKYTLETANSIKEIFFDNYGFELPSFIEKIVKPLIRNDELYNLIEESICEDAPNNLNDGGVIKHSYHPKVLQLHDLINNGKLHIEKLKDQYKKETGIDSLKISHNNVIGLFIDITAKNANKINDPKFIHRQTTVNSVRYTTAELQKLESDLVNAKTLVVSLEKELYEDICKRVTKQSDYLRILASSLSGIDVFCNFAYIASENDYTRPEFTDDLSFDIVKGRHPVVEEALNKERKSFVHNDCHLSEAERIWLITGPNMAGKSTFMRQNAIIAIIAQIGSFVPAKSARIGMVDKIFSRIGAADDLIKGQSTFMAEMLETSAILAQSTKNSLIILDEVGRGTSTYDGVSIAWSVLEYIHDKLKCRCLFATHYHELTIMDNFLPAMQNYTIAIEESGKDILFLHNIIAGAADRSYGIHVAALAGLPASVINRAEQILLKFEKNAAGKGKNILSTESNNLSLFAIESPKLQNSKLEEKFKTIDPDKLSPKEALELLYQLKSNFIKQ.

Position 641-648 (641-648) interacts with ATP; it reads GPNMAGKS.

This sequence belongs to the DNA mismatch repair MutS family.

This protein is involved in the repair of mismatches in DNA. It is possible that it carries out the mismatch recognition step. This protein has a weak ATPase activity. This chain is DNA mismatch repair protein MutS, found in Rickettsia bellii (strain OSU 85-389).